Here is a 117-residue protein sequence, read N- to C-terminus: Hemerythrin subunit alpha (117 aa).

7 residues coordinate Fe cation: histidine 24, histidine 53, glutamate 57, histidine 72, histidine 76, histidine 105, and aspartate 110.

It belongs to the hemerythrin family. In terms of assembly, octamer composed of two types of chains: alpha and beta.

Its function is as follows. Hemerythrin is a respiratory protein in blood cells of certain marine worms. The oxygen-binding site in each chain contains two iron atoms. The protein is Hemerythrin subunit alpha of Lingula reevii (Inarticulated brachiopod).